A 234-amino-acid chain; its full sequence is Ribonuclease HII (234 aa).

The region spanning 16–207 (ALVAGVDEAG…VRRMLTPKAI (192 aa)) is the RNase H type-2 domain. 3 residues coordinate a divalent metal cation: aspartate 22, glutamate 23, and aspartate 115.

The protein belongs to the RNase HII family. Requires Mn(2+) as cofactor. Mg(2+) serves as cofactor.

The protein resides in the cytoplasm. It carries out the reaction Endonucleolytic cleavage to 5'-phosphomonoester.. Endonuclease that specifically degrades the RNA of RNA-DNA hybrids. This is Ribonuclease HII from Xylella fastidiosa (strain M12).